The chain runs to 241 residues: Tumor necrosis factor receptor superfamily member 18 (241 aa).

An N-terminal signal peptide occupies residues 1–25; that stretch reads MAQHGAMGAFRALCGLALLCALSLG. The Extracellular segment spans residues 26 to 162; it reads QRPTGGPGCG…CVPGSPPAEP (137 aa). Disulfide bonds link Cys-34/Cys-49, Cys-74/Cys-86, Cys-81/Cys-94, Cys-115/Cys-134, and Cys-128/Cys-153. TNFR-Cys repeat units follow at residues 34-72, 74-112, and 115-153; these read CGPG…EWDC, CVQP…GFQC, and CASG…NAVC. Residue Asn-146 is glycosylated (N-linked (GlcNAc...) asparagine). Residues 163–183 form a helical membrane-spanning segment; the sequence is LGWLTVVLLAVAACVLLLTSA. Topologically, residues 184–241 are cytoplasmic; the sequence is QLGLHIWQLRSQCMWPRETQLLLEVPPSTEDARSCQFPEEERGERSAEEKGRLGDLWV. Positions 214–241 are disordered; the sequence is DARSCQFPEEERGERSAEEKGRLGDLWV. Residues 222-241 are compositionally biased toward basic and acidic residues; that stretch reads EEERGERSAEEKGRLGDLWV.

In terms of assembly, binds to TRAF1, TRAF2, and TRAF3, but not TRAF5 and TRAF6. Binds through its C-terminus to SIVA1/SIVA. As to expression, expressed in lymph node, peripheral blood leukocytes and weakly in spleen.

The protein localises to the cell membrane. It localises to the secreted. Receptor for TNFSF18. Seems to be involved in interactions between activated T-lymphocytes and endothelial cells and in the regulation of T-cell receptor-mediated cell death. Mediated NF-kappa-B activation via the TRAF2/NIK pathway. The chain is Tumor necrosis factor receptor superfamily member 18 (TNFRSF18) from Homo sapiens (Human).